A 334-amino-acid chain; its full sequence is Heme A synthase (334 aa).

The next 5 membrane-spanning stretches (helical) occupy residues 6–26 (ITRW…IGGI), 93–113 (GRIT…QGVI), 119–139 (LPYI…WYMV), 154–174 (LAFH…QLIK), and 189–209 (LIFS…GALV). Heme is bound at residue H253. Transmembrane regions (helical) follow at residues 255–275 (LGGF…FKVK), 282–302 (IAYF…ITIV), and 305–325 (VPII…SIII). H313 is a binding site for heme.

This sequence belongs to the COX15/CtaA family. Type 2 subfamily. As to quaternary structure, interacts with CtaB. Heme b is required as a cofactor.

The protein resides in the cell membrane. The catalysed reaction is Fe(II)-heme o + 2 A + H2O = Fe(II)-heme a + 2 AH2. Its pathway is porphyrin-containing compound metabolism; heme A biosynthesis; heme A from heme O: step 1/1. Catalyzes the conversion of heme O to heme A by two successive hydroxylations of the methyl group at C8. The first hydroxylation forms heme I, the second hydroxylation results in an unstable dihydroxymethyl group, which spontaneously dehydrates, resulting in the formyl group of heme A. This is Heme A synthase from Rickettsia prowazekii (strain Madrid E).